Reading from the N-terminus, the 124-residue chain is ATP synthase epsilon chain (124 aa).

It belongs to the ATPase epsilon chain family. In terms of assembly, F-type ATPases have 2 components, CF(1) - the catalytic core - and CF(0) - the membrane proton channel. CF(1) has five subunits: alpha(3), beta(3), gamma(1), delta(1), epsilon(1). CF(0) has three main subunits: a, b and c.

The protein localises to the cell membrane. Its function is as follows. Produces ATP from ADP in the presence of a proton gradient across the membrane. The protein is ATP synthase epsilon chain of Streptomyces avermitilis (strain ATCC 31267 / DSM 46492 / JCM 5070 / NBRC 14893 / NCIMB 12804 / NRRL 8165 / MA-4680).